Reading from the N-terminus, the 192-residue chain is Adenylate kinase (192 aa).

12-17 (GSGKTT) serves as a coordination point for ATP. The interval 34–63 (STGDLLRAEVASGSELGKTIDSFISKGNLV) is NMP. AMP-binding positions include Thr-35, Arg-40, 61–63 (NLV), 88–91 (GYPR), and Gln-95. The segment at 130-136 (GRNRGTD) is LID. An ATP-binding site is contributed by Arg-131. Positions 133 and 145 each coordinate AMP. Arg-173 lines the ATP pocket.

Belongs to the adenylate kinase family. In terms of assembly, monomer.

Its subcellular location is the cytoplasm. The catalysed reaction is AMP + ATP = 2 ADP. It functions in the pathway purine metabolism; AMP biosynthesis via salvage pathway; AMP from ADP: step 1/1. Catalyzes the reversible transfer of the terminal phosphate group between ATP and AMP. Plays an important role in cellular energy homeostasis and in adenine nucleotide metabolism. The chain is Adenylate kinase from Campylobacter jejuni (strain RM1221).